A 262-amino-acid polypeptide reads, in one-letter code: Transmembrane protein 81 (262 aa).

A signal peptide spans 1–30 (MKAVATVFICGSLVLITYLPLVVTSPQTLA). Residues 31 to 225 (IPEKLRQAVG…HLPGWRKKVS (195 aa)) are Extracellular-facing. N-linked (GlcNAc...) asparagine glycosylation is present at Asn45. Residues 83 to 171 (TNWICGMLHF…VQQLKNLKLV (89 aa)) form the Ig-like domain. A disulfide bond links Cys104 and Cys160. Asn211 is a glycosylation site (N-linked (GlcNAc...) asparagine). The chain crosses the membrane as a helical span at residues 226-246 (LALGVGIAAGVVGGVLVNVAL). Over 247–262 (CRVLGGTGGNGNLSSL) the chain is Cytoplasmic.

In terms of assembly, forms a complex with IZUMO1 and SPACA6 on spermatocyte cell membrane required for fertilization.

The protein localises to the cell membrane. Essential fertilization factor required for male fertility. Part of a conserved trimeric sperm complex with the essential fertilization factors IZUMO1 and SPACA6 which bridges sperm and oocyte membranes during fertilization by binding to IZUMO1R/JUNO on the oocyte. The sequence is that of Transmembrane protein 81 (Tmem81) from Rattus norvegicus (Rat).